We begin with the raw amino-acid sequence, 271 residues long: Urease accessory protein UreD (271 aa).

It belongs to the UreD family. UreD, UreF and UreG form a complex that acts as a GTP-hydrolysis-dependent molecular chaperone, activating the urease apoprotein by helping to assemble the nickel containing metallocenter of UreC. The UreE protein probably delivers the nickel.

The protein resides in the cytoplasm. Its function is as follows. Required for maturation of urease via the functional incorporation of the urease nickel metallocenter. This chain is Urease accessory protein UreD, found in Haemophilus influenzae (strain 86-028NP).